We begin with the raw amino-acid sequence, 959 residues long: Protovillin (959 aa).

Residues 1-53 (MEPPLELPTQRKRVIPSKFGILKRNAEIEAEKNRENLQQSSCFSHINEIGKEI) are tail. The segment at 54–832 (GLEIWKIIDD…PIMLPTSGVT (779 aa)) is core. Gelsolin-like repeat units lie at residues 64 to 116 (STIQ…SQET), 204 to 244 (IRVK…LEKG), 309 to 366 (IKLY…DQRT), 479 to 529 (RNKF…EDKG), 603 to 647 (INIH…KEAA), and 713 to 754 (FKVF…TEKL). Tandem repeats lie at residues 840 to 849 (TPKPITTPTV) and 851 to 860 (TPKPITTPTV). The interval 840–860 (TPKPITTPTVTTPKPITTPTV) is 2 X 10 AA repeats of T-P-K-P-I-T-T-P-T-V. The region spanning 895–959 (TTITTFYPLS…KQLRVDNGLF (65 aa)) is the HP domain.

Belongs to the villin/gelsolin family.

Its subcellular location is the cytoplasm. The protein localises to the cytoskeleton. Functionally, caps actin filaments but displays neither severing nor cross-linking nor nucleating activities. Protovillin seems to be a villin precursor with only archaic capping activity. It lacks essential changes in the sequence to allow bundling of actin filaments and consequently the appearance of microvilli. The sequence is that of Protovillin (vilB) from Dictyostelium discoideum (Social amoeba).